The chain runs to 249 residues: Ubiquinone/menaquinone biosynthesis C-methyltransferase UbiE (249 aa).

S-adenosyl-L-methionine-binding positions include T72, D93, and 121 to 122 (NA).

The protein belongs to the class I-like SAM-binding methyltransferase superfamily. MenG/UbiE family.

The enzyme catalyses a 2-demethylmenaquinol + S-adenosyl-L-methionine = a menaquinol + S-adenosyl-L-homocysteine + H(+). The catalysed reaction is a 2-methoxy-6-(all-trans-polyprenyl)benzene-1,4-diol + S-adenosyl-L-methionine = a 5-methoxy-2-methyl-3-(all-trans-polyprenyl)benzene-1,4-diol + S-adenosyl-L-homocysteine + H(+). It participates in quinol/quinone metabolism; menaquinone biosynthesis; menaquinol from 1,4-dihydroxy-2-naphthoate: step 2/2. It functions in the pathway cofactor biosynthesis; ubiquinone biosynthesis. Its function is as follows. Methyltransferase required for the conversion of demethylmenaquinol (DMKH2) to menaquinol (MKH2) and the conversion of 2-polyprenyl-6-methoxy-1,4-benzoquinol (DDMQH2) to 2-polyprenyl-3-methyl-6-methoxy-1,4-benzoquinol (DMQH2). In Hahella chejuensis (strain KCTC 2396), this protein is Ubiquinone/menaquinone biosynthesis C-methyltransferase UbiE.